A 215-amino-acid chain; its full sequence is MRRVVGKRVLEFSEAEFDQLRSQYDEVVLDVGTGDGKHPYKVARQHPNQLVVALDADKTRMERMSAKAAAKPAKGGLPNLLYLWATAEKLPPLTGVGELHVLMPWGSLLRGILGSSPEMLRGLAAVCRPDAAFLVALNLHAWRPPVPEVGEHPEPTPETVDEGLAARYAQAGWQLTDCRYLAAEEVAALETSWTRRLNSSRDRFDVLALTGKINP.

Residues Gly-32, Asp-55, 87 to 88 (AE), 102 to 107 (LMPWGS), and 191 to 193 (TSW) contribute to the S-adenosyl-L-methionine site.

The protein belongs to the methyltransferase superfamily. Kanamycin-apramycin resistance family.

It carries out the reaction adenosine(1408) in 16S rRNA + S-adenosyl-L-methionine = N(1)-methyladenosine(1408) in 16S rRNA + S-adenosyl-L-homocysteine + H(+). Its function is as follows. Specifically methylates the N(1) position of adenine 1408 in 16S rRNA. Confers resistance to various aminoglycosides. In Streptoalloteichus hindustanus, this protein is 16S rRNA (adenine(1408)-N(1))-methyltransferase (kamB).